Reading from the N-terminus, the 835-residue chain is Axin-1 (835 aa).

The interval 16 to 60 (LGSSFTEDAPRPPVPGEEGDLVSSDGRQYNHSFYSSKSDSLKNEA) is disordered. The span at 40–53 (DGRQYNHSFYSSKS) shows a compositional bias: polar residues. The RGS domain maps to 92-214 (SLHSLLDDQD…LKSDIYLEYT (123 aa)). Residues 318-349 (ATSANDSEQQSMSSDADTLSLTDSSVDGVPPY) are disordered. The segment covering 328 to 344 (SMSSDADTLSLTDSSVD) has biased composition (low complexity). The interaction with GSK3B stretch occupies residues 351 to 436 (YRKPHRREIH…DADISTGPSL (86 aa)). The interaction with beta-catenin stretch occupies residues 437–512 (ANHRVPPAVH…SPDGLPAGKI (76 aa)). Disordered stretches follow at residues 485 to 530 (KTPG…QARQ) and 602 to 627 (GYSS…FEMR). Residues 616–627 (RKGEDGRNFEMR) show a composition bias toward basic and acidic residues. The DIX domain maps to 753–835 (CENITVAYYF…KIIGKVEKVD (83 aa)).

As to quaternary structure, homodimer. Interacts with dixdc1. Interacts with hwa; leading to promote the tankyrase-mediated degradation of axin1. ADP-ribosylated by tankyrase tnks and tnks2. Poly-ADP-ribosylated protein is recognized by rnf146, followed by ubiquitination at 'Lys-48' and subsequent activation of the Wnt signaling pathway. Post-translationally, ubiquitinated by rnf146 when poly-ADP-ribosylated, leading to its degradation and subsequent activation of the Wnt signaling pathway.

It is found in the cytoplasm. It localises to the nucleus. The protein localises to the membrane. The protein resides in the cell membrane. Component of the beta-catenin destruction complex required for regulating ctnnb1 levels through phosphorylation and ubiquitination, and modulating Wnt-signaling. Controls dorsoventral patterning via two opposing effects: down-regulates ctnnb1 to inhibit the Wnt signaling pathway and ventralize embryos, but also dorsalizes embryos by activating a Wnt-independent JNK signaling pathway. The protein is Axin-1 (axin1) of Danio rerio (Zebrafish).